Reading from the N-terminus, the 526-residue chain is Cytochrome P450 monooxygenase 58 (526 aa).

Helical transmembrane passes span 13–33 (IASS…LLLI), 115–135 (FIMA…GYGK), and 306–326 (IGAG…AMTL). Residue cysteine 451 coordinates heme.

This sequence belongs to the cytochrome P450 family. It depends on heme as a cofactor.

The protein localises to the membrane. It functions in the pathway secondary metabolite biosynthesis. Functionally, cytochrome P450 monooxygenase that is able to use delta(6)-protoilludene as a substrate to produce delta(6)-protoilludene-8-ol. The sequence is that of Cytochrome P450 monooxygenase 58 from Postia placenta (strain ATCC 44394 / Madison 698-R) (Brown rot fungus).